We begin with the raw amino-acid sequence, 201 residues long: 3-isopropylmalate dehydratase small subunit (201 aa).

Belongs to the LeuD family. LeuD type 1 subfamily. As to quaternary structure, heterodimer of LeuC and LeuD.

The enzyme catalyses (2R,3S)-3-isopropylmalate = (2S)-2-isopropylmalate. It participates in amino-acid biosynthesis; L-leucine biosynthesis; L-leucine from 3-methyl-2-oxobutanoate: step 2/4. Functionally, catalyzes the isomerization between 2-isopropylmalate and 3-isopropylmalate, via the formation of 2-isopropylmaleate. This is 3-isopropylmalate dehydratase small subunit from Kineococcus radiotolerans (strain ATCC BAA-149 / DSM 14245 / SRS30216).